Consider the following 134-residue polypeptide: ATP synthase epsilon chain (134 aa).

This sequence belongs to the ATPase epsilon chain family. As to quaternary structure, F-type ATPases have 2 components, CF(1) - the catalytic core - and CF(0) - the membrane proton channel. CF(1) has five subunits: alpha(3), beta(3), gamma(1), delta(1), epsilon(1). CF(0) has three main subunits: a, b and c.

Its subcellular location is the cellular thylakoid membrane. Its function is as follows. Produces ATP from ADP in the presence of a proton gradient across the membrane. The chain is ATP synthase epsilon chain from Prochlorococcus marinus (strain MIT 9215).